The following is a 323-amino-acid chain: Sphingolipid delta(4)-desaturase/C4-monooxygenase DES2 (323 aa).

Residue Gly2 is the site of N-myristoyl glycine attachment. Transmembrane regions (helical) follow at residues Trp45–Ala65 and Trp68–Ile88. A Histidine box-1 motif is present at residues His89–His93. The interval Ala95–Thr99 is required for C4-hydroxylase activity. The Histidine box-2 motif lies at His128–His132. The helical transmembrane segment at Val210 to Ala231 threads the bilayer. The short motif at His259 to His263 is the Histidine box-3 element.

The protein belongs to the fatty acid desaturase type 1 family. DEGS subfamily. Highly expressed in skin, intestine and kidney.

The protein resides in the endoplasmic reticulum membrane. It carries out the reaction a dihydroceramide + 2 Fe(II)-[cytochrome b5] + O2 + 2 H(+) = a phytoceramide + 2 Fe(III)-[cytochrome b5] + H2O. The enzyme catalyses an N-acylsphinganine + 2 Fe(II)-[cytochrome b5] + O2 + 2 H(+) = an N-acylsphing-4-enine + 2 Fe(III)-[cytochrome b5] + 2 H2O. It catalyses the reaction N-octanoylsphinganine + 2 Fe(II)-[cytochrome b5] + O2 + 2 H(+) = N-octanoyl-4-hydroxysphinganine + 2 Fe(III)-[cytochrome b5] + H2O. The catalysed reaction is an N-acylsphinganine + 2 Fe(II)-[cytochrome b5] + O2 + 2 H(+) = an N-acyl-(4R)-4-hydroxysphinganine + 2 Fe(III)-[cytochrome b5] + H2O. It participates in membrane lipid metabolism; sphingolipid biosynthesis. In terms of biological role, bifunctional enzyme which acts both as a sphingolipid delta(4)-desaturase and a sphingolipid C4-monooxygenase. The polypeptide is Sphingolipid delta(4)-desaturase/C4-monooxygenase DES2 (Homo sapiens (Human)).